Here is a 1014-residue protein sequence, read N- to C-terminus: UvrABC system protein A (1014 aa).

32-39 (GLSGSGKS) contacts ATP. 2 ABC transporter domains span residues 314-592 (WSHG…AESQ) and 612-941 (QDPS…KFLR). 645–652 (GVSGSGKS) contributes to the ATP binding site. The C4-type zinc finger occupies 744-770 (CENCAGDGTIKIEMNFLPDVYVPCEVC). A compositionally biased stretch (low complexity) spans 976–995 (TKTVTGTAAKKATATRTAKT). The disordered stretch occupies residues 976–1014 (TKTVTGTAAKKATATRTAKTAVKKAAKPAAKKTTRTSKA). Residues 996-1014 (AVKKAAKPAAKKTTRTSKA) are compositionally biased toward basic residues.

It belongs to the ABC transporter superfamily. UvrA family. In terms of assembly, forms a heterotetramer with UvrB during the search for lesions.

The protein resides in the cytoplasm. The UvrABC repair system catalyzes the recognition and processing of DNA lesions. UvrA is an ATPase and a DNA-binding protein. A damage recognition complex composed of 2 UvrA and 2 UvrB subunits scans DNA for abnormalities. When the presence of a lesion has been verified by UvrB, the UvrA molecules dissociate. The polypeptide is UvrABC system protein A (Streptomyces coelicolor (strain ATCC BAA-471 / A3(2) / M145)).